A 303-amino-acid polypeptide reads, in one-letter code: Small ribosomal subunit protein uS2 (303 aa).

The disordered stretch occupies residues 258-303 (ATLRENAVVTENEVKKTDEEEGASSEAARADAQNEEAVAKPGEEVE). The span at 294-303 (AVAKPGEEVE) shows a compositional bias: basic and acidic residues.

It belongs to the universal ribosomal protein uS2 family.

The polypeptide is Small ribosomal subunit protein uS2 (Bifidobacterium animalis subsp. lactis (strain AD011)).